We begin with the raw amino-acid sequence, 103 residues long: Large ribosomal subunit protein uL23 (103 aa).

This sequence belongs to the universal ribosomal protein uL23 family. Part of the 50S ribosomal subunit. Contacts protein L29, and trigger factor when it is bound to the ribosome.

Its function is as follows. One of the early assembly proteins it binds 23S rRNA. One of the proteins that surrounds the polypeptide exit tunnel on the outside of the ribosome. Forms the main docking site for trigger factor binding to the ribosome. This chain is Large ribosomal subunit protein uL23, found in Pelodictyon phaeoclathratiforme (strain DSM 5477 / BU-1).